The primary structure comprises 375 residues: uncharacterized protein (375 aa).

The region spanning 52 to 301 (VLLSAHRGSW…KQGFATYHES (250 aa)) is the GP-PDE domain.

This is an uncharacterized protein from Sinorhizobium fredii (strain NBRC 101917 / NGR234).